Here is a 177-residue protein sequence, read N- to C-terminus: Coatomer subunit zeta-3 (177 aa).

Belongs to the adaptor complexes small subunit family. As to quaternary structure, oligomeric complex that consists of at least the alpha, beta, beta', gamma, delta, epsilon and zeta subunits.

It is found in the cytoplasm. The protein localises to the golgi apparatus membrane. Its subcellular location is the cytoplasmic vesicle. The protein resides in the COPI-coated vesicle membrane. Functionally, the coatomer is a cytosolic protein complex that binds to dilysine motifs and reversibly associates with Golgi non-clathrin-coated vesicles, which further mediate biosynthetic protein transport from the ER, via the Golgi up to the trans Golgi network. Coatomer complex is required for budding from Golgi membranes, and is essential for the retrograde Golgi-to-ER transport of dilysine-tagged proteins. The zeta subunit may be involved in regulating the coat assembly and, hence, the rate of biosynthetic protein transport due to its association-dissociation properties with the coatomer complex. This Oryza sativa subsp. japonica (Rice) protein is Coatomer subunit zeta-3.